The following is a 508-amino-acid chain: NADH-quinone oxidoreductase subunit N 1 (508 aa).

13 consecutive transmembrane segments (helical) span residues 2–22 (ILGP…GALL), 47–67 (ALGT…VGFV), 87–107 (FTLF…LLAG), 126–146 (FSTV…LFLG), 175–195 (FLLG…IYGA), 220–240 (ALLL…VSAV), 260–280 (FMAV…LLGA), 291–311 (AGWP…ANLI), 321–341 (MLAY…AATV), 351–371 (VMFY…TLIL), 396–416 (ALAF…AGFF), 431–453 (YTLS…RVLV), and 479–499 (LVVS…SLGI).

It belongs to the complex I subunit 2 family. NDH-1 is composed of 14 different subunits. Subunits NuoA, H, J, K, L, M, N constitute the membrane sector of the complex.

The protein localises to the cell inner membrane. The enzyme catalyses a quinone + NADH + 5 H(+)(in) = a quinol + NAD(+) + 4 H(+)(out). Its function is as follows. NDH-1 shuttles electrons from NADH, via FMN and iron-sulfur (Fe-S) centers, to quinones in the respiratory chain. The immediate electron acceptor for the enzyme in this species is believed to be ubiquinone. Couples the redox reaction to proton translocation (for every two electrons transferred, four hydrogen ions are translocated across the cytoplasmic membrane), and thus conserves the redox energy in a proton gradient. This Sorangium cellulosum (strain So ce56) (Polyangium cellulosum (strain So ce56)) protein is NADH-quinone oxidoreductase subunit N 1.